The sequence spans 87 residues: Cell division topological specificity factor (87 aa).

This sequence belongs to the MinE family.

Functionally, prevents the cell division inhibition by proteins MinC and MinD at internal division sites while permitting inhibition at polar sites. This ensures cell division at the proper site by restricting the formation of a division septum at the midpoint of the long axis of the cell. The chain is Cell division topological specificity factor from Vibrio parahaemolyticus serotype O3:K6 (strain RIMD 2210633).